A 369-amino-acid polypeptide reads, in one-letter code: 2-aminoethylphosphonate--pyruvate transaminase (369 aa).

K193 is subject to N6-(pyridoxal phosphate)lysine.

It belongs to the class-V pyridoxal-phosphate-dependent aminotransferase family. PhnW subfamily. In terms of assembly, homodimer. It depends on pyridoxal 5'-phosphate as a cofactor.

It catalyses the reaction (2-aminoethyl)phosphonate + pyruvate = phosphonoacetaldehyde + L-alanine. In terms of biological role, involved in phosphonate degradation. In Pseudomonas fluorescens (strain ATCC BAA-477 / NRRL B-23932 / Pf-5), this protein is 2-aminoethylphosphonate--pyruvate transaminase.